Reading from the N-terminus, the 122-residue chain is Small ribosomal subunit protein uS13 (122 aa).

The tract at residues 97-122 (PVRGQRTHTNARTRKGPARAIAGKKK) is disordered.

It belongs to the universal ribosomal protein uS13 family. Part of the 30S ribosomal subunit. Forms a loose heterodimer with protein S19. Forms two bridges to the 50S subunit in the 70S ribosome.

In terms of biological role, located at the top of the head of the 30S subunit, it contacts several helices of the 16S rRNA. In the 70S ribosome it contacts the 23S rRNA (bridge B1a) and protein L5 of the 50S subunit (bridge B1b), connecting the 2 subunits; these bridges are implicated in subunit movement. Contacts the tRNAs in the A and P-sites. This Bartonella bacilliformis (strain ATCC 35685 / KC583 / Herrer 020/F12,63) protein is Small ribosomal subunit protein uS13.